Here is a 437-residue protein sequence, read N- to C-terminus: MSIDINWRTATSGPDGEALAERIRSFIHDRFQQVALPRFIRSVQVHSFDFGTIPPELEIKDFCEPFADFYEEDDDADTSDVSEDLLSEHSSQWDRTHSELNEPPYREESAMNHGLRDPFHEGFPPSPLRSPLGEHLNPHFLPRAGTPGIPGGTSNLGYHLMSLGGLSGTQTPLAAVAGGNPFASGWSDSGMGFGNRGRSERQGPIPQHRPEPEIDTSNSTSRPSTANTLPSHLSESNNLNADGATGRNERGSLHNGDPLADHTCSGHLPLPPRMRERRPEDFQVLCHAKYAGDVRLSLTAEILLDYPMPSFVGLPLKLNVTGITFDGVAVVAYIRKRVHFCFLSAEDADALIGSEQQQESGGDDHRPRSGADSSAHTSQKRQGGLLQEIRVESEIGRKENGKQVLKNVGKVERFVLAQVRRIFEEELVYPSFWTFLI.

The SMP-LTD domain maps to 1 to 437 (MSIDINWRTA…VYPSFWTFLI (437 aa)). Residues 73–85 (DDDADTSDVSEDL) are compositionally biased toward acidic residues. 3 disordered regions span residues 73–101 (DDDA…SELN), 187–274 (SDSG…PPRM), and 354–384 (SEQQ…RQGG). Positions 91–101 (SQWDRTHSELN) are enriched in basic and acidic residues. Composition is skewed to polar residues over residues 215–240 (DTSN…NNLN) and 371–381 (ADSSAHTSQKR).

The protein belongs to the MDM12 family. As to quaternary structure, component of the ER-mitochondria encounter structure (ERMES) or MDM complex, composed of mmm1, mdm10, mdm12 and mdm34. A mmm1 homodimer associates with one molecule of mdm12 on each side in a pairwise head-to-tail manner, and the SMP-LTD domains of mmm1 and mdm12 generate a continuous hydrophobic tunnel for phospholipid trafficking.

It localises to the mitochondrion outer membrane. It is found in the endoplasmic reticulum membrane. In terms of biological role, component of the ERMES/MDM complex, which serves as a molecular tether to connect the endoplasmic reticulum (ER) and mitochondria. Components of this complex are involved in the control of mitochondrial shape and protein biogenesis, and function in nonvesicular lipid trafficking between the ER and mitochondria. Mdm12 is required for the interaction of the ER-resident membrane protein mmm1 and the outer mitochondrial membrane-resident beta-barrel protein mdm10. The mdm12-mmm1 subcomplex functions in the major beta-barrel assembly pathway that is responsible for biogenesis of all mitochondrial outer membrane beta-barrel proteins, and acts in a late step after the SAM complex. The mdm10-mdm12-mmm1 subcomplex further acts in the TOM40-specific pathway after the action of the mdm12-mmm1 complex. Essential for establishing and maintaining the structure of mitochondria and maintenance of mtDNA nucleoids. This chain is Mitochondrial distribution and morphology protein 12, found in Aspergillus clavatus (strain ATCC 1007 / CBS 513.65 / DSM 816 / NCTC 3887 / NRRL 1 / QM 1276 / 107).